The primary structure comprises 273 residues: Protein N-terminal and lysine N-methyltransferase EFM7 (273 aa).

Positions 1 to 32 (MSDIEDLASGGLFDEPKDFYKPEEQPGSDSYA) are disordered. The segment covering 14-24 (DEPKDFYKPEE) has biased composition (basic and acidic residues). Residues Trp-65, 92–94 (GAG), Asp-114, Trp-161, and Ser-183 each bind S-adenosyl-L-methionine.

It belongs to the class I-like SAM-binding methyltransferase superfamily. EFM7 family.

It is found in the cytoplasm. In terms of biological role, S-adenosyl-L-methionine-dependent protein methyltransferase that trimethylates the N-terminal glycine 'Gly-2' of elongation factor 1-alpha, before also catalyzing the mono- and dimethylation of 'Lys-3'. In Yarrowia lipolytica (strain CLIB 122 / E 150) (Yeast), this protein is Protein N-terminal and lysine N-methyltransferase EFM7.